The following is a 218-amino-acid chain: Ribonuclease S-7 (218 aa).

A signal peptide spans 1-22; sequence MLNSPLTSVLFVLLFVLSPIYG. Q32 is a binding site for RNA. The cysteines at positions 38 and 43 are disulfide-linked. Residue N49 is glycosylated (N-linked (GlcNAc...) asparagine). Residue H53 coordinates RNA. The active-site Proton donor is H53. N59 carries N-linked (GlcNAc...) asparagine glycosylation. A disulfide bridge links C67 with C116. RNA contacts are provided by residues 91 to 92, F105, 108 to 109, and 112 to 113; these read DL, HE, and KH. The active site involves E109. Catalysis depends on H113, which acts as the Proton acceptor. N162 carries N-linked (GlcNAc...) asparagine glycosylation. 2 disulfides stabilise this stretch: C177-C207 and C190-C201.

This sequence belongs to the RNase T2 family.

Its subcellular location is the secreted. The protein resides in the extracellular space. It catalyses the reaction a ribonucleotidyl-ribonucleotide-RNA + H2O = a 3'-end 3'-phospho-ribonucleotide-RNA + a 5'-end dephospho-ribonucleoside-RNA + H(+). Its function is as follows. Self-incompatibility (SI) is the inherited ability of a flowering plant to prevent self-fertilization by discriminating between self and non-self pollen during pollination. In many species of the Solanaceae, self-incompatibility is controlled by the single, multiallelic locus S. This stylar glycoprotein is associated with expression of self-incompatibility in potato. The polypeptide is Ribonuclease S-7 (Nicotiana alata (Winged tobacco)).